The primary structure comprises 288 residues: Lipoyl synthase (288 aa).

Cys42, Cys47, Cys53, Cys68, Cys72, Cys75, and Ser280 together coordinate [4Fe-4S] cluster. The 216-residue stretch at 54–269 (WGEGTATFMI…EKYGIELGFR (216 aa)) folds into the Radical SAM core domain.

The protein belongs to the radical SAM superfamily. Lipoyl synthase family. [4Fe-4S] cluster is required as a cofactor.

It is found in the cytoplasm. The catalysed reaction is [[Fe-S] cluster scaffold protein carrying a second [4Fe-4S](2+) cluster] + N(6)-octanoyl-L-lysyl-[protein] + 2 oxidized [2Fe-2S]-[ferredoxin] + 2 S-adenosyl-L-methionine + 4 H(+) = [[Fe-S] cluster scaffold protein] + N(6)-[(R)-dihydrolipoyl]-L-lysyl-[protein] + 4 Fe(3+) + 2 hydrogen sulfide + 2 5'-deoxyadenosine + 2 L-methionine + 2 reduced [2Fe-2S]-[ferredoxin]. It participates in protein modification; protein lipoylation via endogenous pathway; protein N(6)-(lipoyl)lysine from octanoyl-[acyl-carrier-protein]: step 2/2. Its function is as follows. Catalyzes the radical-mediated insertion of two sulfur atoms into the C-6 and C-8 positions of the octanoyl moiety bound to the lipoyl domains of lipoate-dependent enzymes, thereby converting the octanoylated domains into lipoylated derivatives. The chain is Lipoyl synthase from Flavobacterium johnsoniae (strain ATCC 17061 / DSM 2064 / JCM 8514 / BCRC 14874 / CCUG 350202 / NBRC 14942 / NCIMB 11054 / UW101) (Cytophaga johnsonae).